A 489-amino-acid chain; its full sequence is Beta-1,3-glucosyltransferase (489 aa).

Position 1 (Met1) is a topological domain, cytoplasmic. A helical; Signal-anchor for type II membrane protein transmembrane segment spans residues 2-22 (RPPALLALFSCSAAFALMSEE). Residues 23 to 489 (IKEKVTPSQD…ETQKDPREEL (467 aa)) are Lumenal-facing. The N-linked (GlcNAc...) asparagine glycan is linked to Asn78. The Prevents secretion from ER motif lies at 486–489 (REEL).

Belongs to the glycosyltransferase 31 family.

It localises to the endoplasmic reticulum membrane. It participates in protein modification; protein glycosylation. In terms of biological role, O-glucosyltransferase that transfers glucose toward fucose with a beta-1,3 linkage. Specifically glucosylates O-linked fucosylglycan on TSP type-1 domains of proteins, thereby contributing to elongation of O-fucosylglycan. In Mus musculus (Mouse), this protein is Beta-1,3-glucosyltransferase.